The primary structure comprises 393 residues: Formate-dependent phosphoribosylglycinamide formyltransferase (393 aa).

Residues 22-23 and Glu82 contribute to the N(1)-(5-phospho-beta-D-ribosyl)glycinamide site; that span reads EL. Residues Arg114, Lys155, 160–165, 195–198, and Glu203 contribute to the ATP site; these read SSGKGQ and EGFI. The ATP-grasp domain occupies 119-308; the sequence is RLAAEELDLP…QFALHARAIL (190 aa). 2 residues coordinate Mg(2+): Glu267 and Glu279. N(1)-(5-phospho-beta-D-ribosyl)glycinamide-binding positions include Asp286, Lys356, and 363–364; that span reads RR.

This sequence belongs to the PurK/PurT family. As to quaternary structure, homodimer.

It carries out the reaction N(1)-(5-phospho-beta-D-ribosyl)glycinamide + formate + ATP = N(2)-formyl-N(1)-(5-phospho-beta-D-ribosyl)glycinamide + ADP + phosphate + H(+). Its pathway is purine metabolism; IMP biosynthesis via de novo pathway; N(2)-formyl-N(1)-(5-phospho-D-ribosyl)glycinamide from N(1)-(5-phospho-D-ribosyl)glycinamide (formate route): step 1/1. Involved in the de novo purine biosynthesis. Catalyzes the transfer of formate to 5-phospho-ribosyl-glycinamide (GAR), producing 5-phospho-ribosyl-N-formylglycinamide (FGAR). Formate is provided by PurU via hydrolysis of 10-formyl-tetrahydrofolate. In Pseudomonas putida (strain ATCC 47054 / DSM 6125 / CFBP 8728 / NCIMB 11950 / KT2440), this protein is Formate-dependent phosphoribosylglycinamide formyltransferase.